The chain runs to 51 residues: Probable antitoxin PhoAT (51 aa).

The protein belongs to the PhoAT antitoxin family. As to quaternary structure, interacts with toxin PhoH2.

In terms of biological role, antitoxin component of a type II toxin-antitoxin (TA) system. The cognate antitoxin is PhoAT; the toxin gene cannot be expressed in the absence of the antitoxin gene in M.smegmatis (strain mc(2)4517), and abrogates the toxic effects of PhoH2 in M.smegmatis strain mc(2)155. This chain is Probable antitoxin PhoAT, found in Mycobacterium tuberculosis (strain ATCC 25618 / H37Rv).